Here is a 286-residue protein sequence, read N- to C-terminus: Beta-lactamase SHV-13 (286 aa).

An N-terminal signal peptide occupies residues Met1–Ala21. The active-site Acyl-ester intermediate is the Ser66. Cys73 and Cys119 are oxidised to a cystine. Residue Glu164 is the Proton acceptor of the active site. Position 230 to 232 (Lys230 to Gly232) interacts with substrate.

This sequence belongs to the class-A beta-lactamase family.

It catalyses the reaction a beta-lactam + H2O = a substituted beta-amino acid. With respect to regulation, inhibited 16-fold better by the beta-lactamase inhibitor clavulanic acid than by tazobactam. Functionally, broad spectrum beta-lactamase which hydrolyzes penicillins, as well as cephalosporins except cephamycins. Also hydrolyzes aztreonam, but not imipenem. Confers highly resistance to ceftazidime, cefotaxime, aztreonam and piperacillin. This is Beta-lactamase SHV-13 (bla) from Klebsiella pneumoniae.